The following is a 215-amino-acid chain: Probable phosphoglycerate mutase GpmB (215 aa).

Substrate-binding positions include 8–15 (RHGETQWN), 21–22 (QG), Arg-58, Arg-60, 82–85 (ELNM), 104–105 (RR), and 151–152 (GI). His-9 serves as the catalytic Tele-phosphohistidine intermediate. Catalysis depends on Glu-82, which acts as the Proton donor/acceptor.

It belongs to the phosphoglycerate mutase family. GpmB subfamily.

It catalyses the reaction (2R)-2-phosphoglycerate = (2R)-3-phosphoglycerate. It participates in carbohydrate degradation; glycolysis; pyruvate from D-glyceraldehyde 3-phosphate: step 3/5. The polypeptide is Probable phosphoglycerate mutase GpmB (Shigella boydii serotype 18 (strain CDC 3083-94 / BS512)).